We begin with the raw amino-acid sequence, 372 residues long: Chloromuconate cycloisomerase (372 aa).

Lys-158 (proton acceptor) is an active-site residue. Residues Asp-187, Glu-213, and Asp-238 each coordinate Mn(2+). The active-site Proton donor is the Glu-316.

The protein belongs to the mandelate racemase/muconate lactonizing enzyme family. It depends on Mn(2+) as a cofactor.

It carries out the reaction 2-[(2R)-2-chloro-2,5-dihydro-5-oxofuryl]acetate = 3-chloro-cis,cis-muconate + H(+). Its pathway is aromatic compound metabolism; 3-chlorocatechol degradation. This is Chloromuconate cycloisomerase (tfdDII) from Cupriavidus pinatubonensis (strain JMP 134 / LMG 1197) (Cupriavidus necator (strain JMP 134)).